The primary structure comprises 141 residues: Decarboxylase CPUR_05434 (141 aa).

One can recognise an EthD domain in the interval 26 to 121; it reads EGMSEEAYRN…MHDHEMFADT (96 aa).

The protein belongs to the tpcK family.

The catalysed reaction is atrochrysone carboxylate + H(+) = atrochrysone + CO2. Functionally, decarboxylase; part of the ergochrome gene cluster responsible for the typical purple-black color of the ergot sclerotia. The ergochrome gene cluster produces several ergot pigments including the yellow ergochrome secalonic acid and its derivatives, as well as the red anthraquinones endocrocin and clavorubin. The pathway begins with the synthesis of atrochrysone thioester by the polyketide synthase (PKS) CPUR_05437. The atrochrysone carboxyl ACP thioesterase CPUR_05436 then breaks the thioester bond and releases the atrochrysone carboxylic acid from CPUR_05437. The decarboxylase CPUR_05434 then catalyzes the concerted decarboxylation-elimination required to convert atochrysone carboxylic acid into emodin anthrone, which is further oxidized to emodin by the anthrone oxygenase CPUR_05435. Emodin is further modified to yield monodictyphenone via several steps involving CPUR_05427, CPUR_05428, CPUR_05429 and CPUR_05430. The short chain dehydrogenase/reductase CPUR_05418 then catalyzes the C-5 ketoreduction to give the xanthone skeleton of the monomeric units. Ergochromes formation requires further dimerization steps of different xanthone units, probably catalyzed by the cytochrome P450 monooxygenase CPUR_05419. CPUR_05425, CPUR_05426 and CPUR_05431 are unique to Claviceps, thus it is likely that they are involved in further modification of xanthone units or in their dimerization. The yellow ergochromes and the red anthraquinone pigments endocrocin and clavorubin are products from the same PKS derived precursors and the latter are likely shunt products in the pathway of xanthone biosynthesis. It is proposed that atrochrysone carboxylic acid released from the PKS CPUR_05437 can also be converted to endocrocin anthrone which is further oxidized into endocrocin by CPUR_05435. Endocrocin could be then modified to clavorubin, possibly by CPUR_05423 and CPUR_05431. Clavorubin is the principal anthraquinone metabolite produced by the cluster with a much higher yield compared to endocrocin. The protein is Decarboxylase CPUR_05434 of Claviceps purpurea (strain 20.1) (Ergot fungus).